Consider the following 249-residue polypeptide: tRNA (guanine-N(1)-)-methyltransferase (249 aa).

Residues Gly-112 and 132-137 contribute to the S-adenosyl-L-methionine site; that span reads LGDFVL.

This sequence belongs to the RNA methyltransferase TrmD family. Homodimer.

Its subcellular location is the cytoplasm. The enzyme catalyses guanosine(37) in tRNA + S-adenosyl-L-methionine = N(1)-methylguanosine(37) in tRNA + S-adenosyl-L-homocysteine + H(+). In terms of biological role, specifically methylates guanosine-37 in various tRNAs. The protein is tRNA (guanine-N(1)-)-methyltransferase of Citrifermentans bemidjiense (strain ATCC BAA-1014 / DSM 16622 / JCM 12645 / Bem) (Geobacter bemidjiensis).